Reading from the N-terminus, the 77-residue chain is Conotoxin VnMEKL-0223 (77 aa).

Positions 1–19 (MQKLTILLLVAAVLMSTQA) are cleaved as a signal peptide. Positions 20–37 (LIKGGGEKRPKEKIKFLS) are excised as a propeptide. 3 disulfide bridges follow: Cys51–Cys65, Cys58–Cys69, and Cys64–Cys74.

The protein belongs to the conotoxin O2 superfamily. Expressed by the venom duct.

It is found in the secreted. This is Conotoxin VnMEKL-0223 from Conus ventricosus (Mediterranean cone).